We begin with the raw amino-acid sequence, 3933 residues long: Circularly permutated Ras protein 2 (3933 aa).

Residues 12–46 (VHEVKKQELESILLQQEQEKQAKEEKESIKDTDDK) are a coiled coil. Disordered regions lie at residues 23-101 (ILLQ…IEKK), 136-189 (DIRE…RKET), 1022-1054 (ITTT…TTTT), and 2817-2839 (NNNN…RPTR). The span at 28 to 62 (EQEKQAKEEKESIKDTDDKPIEDTEHSTNNDKPIE) shows a compositional bias: basic and acidic residues. Positions 70-92 (TPTTTTTTKPTDEASSSSNNNNN) are enriched in low complexity. A compositionally biased stretch (basic and acidic residues) spans 136–145 (DIREPTDKPF). Positions 146-156 (ENTSNIETTRQ) are enriched in polar residues. A coiled-coil region spans residues 167–215 (KTEAERLEQEQKQKQYDENRKETDRKLELELERLKNKKEEVEQIRAYFQ). Basic and acidic residues predominate over residues 168–189 (TEAERLEQEQKQKQYDENRKET). Low complexity predominate over residues 2817–2826 (NNNNNNNRYN). GTP contacts are provided by residues 2853–2857 (DTAGQ), 2913–2916 (TKAD), and 2976–2983 (GDGGIGKS). Disordered stretches follow at residues 3036–3086 (LQSA…LSSR), 3107–3142 (RKSS…QDYE), and 3733–3754 (VIEP…PSSS). The span at 3070-3086 (PSSSSTRTSVSTSLSSR) shows a compositional bias: low complexity. Positions 3107–3120 (RKSSLVEEESKRQY) are enriched in basic and acidic residues. Acidic residues predominate over residues 3121-3141 (DDDDESKSESSEYDDDDDQDY).

This sequence belongs to the small GTPase superfamily. CpRas family.

The polypeptide is Circularly permutated Ras protein 2 (cpras2) (Dictyostelium discoideum (Social amoeba)).